Consider the following 70-residue polypeptide: MTTIRVKENEPYEVALRRFKRTIEKLGLLTDLRAREFYEKPTSERKRKKAAAVKRHYKRVRSMQLPKKLY.

The protein belongs to the bacterial ribosomal protein bS21 family.

The protein is Small ribosomal subunit protein bS21 of Delftia acidovorans (strain DSM 14801 / SPH-1).